The sequence spans 148 residues: Large ribosomal subunit protein bL9 (148 aa).

The tract at residues Gln46 to Ala65 is disordered. The segment covering Lys52–Ala65 has biased composition (basic and acidic residues).

The protein belongs to the bacterial ribosomal protein bL9 family.

Functionally, binds to the 23S rRNA. The polypeptide is Large ribosomal subunit protein bL9 (Staphylococcus carnosus (strain TM300)).